The primary structure comprises 300 residues: MRVIPLASESLGVRSLATFVEAGGIKILIDPGVALGPKRYGLPPAKIELETLQKMRRKIQGYARRADVVTISHYHYDHHTPFFEGLYESSSEEYAREIYAGKLLLIKHPRENINFSQRKRAWAFLKNAEPIARRIEFADGRAFDLGGVTLEFSPAVPHGSEGSRLGFVVMVLIDDGSERIIHASDIQLLNRKAVEWIIEKNPDLLITGGPPTYLGKRAEGSWETGIKNLNEIIRETNAEIILDHHIVRDKRYPEFFDELEKRPKTFAGFLKVEDKPLEAYRRELHKRERGESVELPFRVG.

Belongs to the UPF0282 family.

The chain is UPF0282 protein TGAM_0379 from Thermococcus gammatolerans (strain DSM 15229 / JCM 11827 / EJ3).